Reading from the N-terminus, the 178-residue chain is Caveolin-1 (178 aa).

Position 2 is an N-acetylserine (serine 2). Serine 2 carries the post-translational modification Phosphoserine. Positions 2–94 (SGGKYVDSEG…WKASFTTFTV (93 aa)) are required for homooligomerization. At 2–104 (SGGKYVDSEG…TKYWFYRLLS (103 aa)) the chain is on the cytoplasmic side. The residue at position 5 (lysine 5) is an N6-acetyllysine; alternate. Residue lysine 5 forms a Glycyl lysine isopeptide (Lys-Gly) (interchain with G-Cter in ubiquitin); alternate linkage. At tyrosine 6 the chain carries Phosphotyrosine. A Phosphoserine modification is found at serine 9. Tyrosine 14 carries the post-translational modification Phosphotyrosine; by ABL1. Phosphotyrosine is present on tyrosine 25. Glycyl lysine isopeptide (Lys-Gly) (interchain with G-Cter in ubiquitin) cross-links involve residues lysine 26, lysine 30, lysine 39, lysine 47, and lysine 57. The tract at residues 82–94 (DGIWKASFTTFTV) is interaction with CAVIN3. Residues 105-125 (ALFGIPMALIWGIYFAILSFL) constitute an intramembrane region (helical). The Cytoplasmic segment spans residues 126-178 (HIWAVVPCIKSFLIEIQCISRVYSIYVHTFCDPFFEAVGKIFSNIRINMQKEI). The tract at residues 131–142 (VPCIKSFLIEIQ) is interacts with SPRY1, SPRY2, SPRY3 and SPRY4. 3 S-palmitoyl cysteine lipidation sites follow: cysteine 133, cysteine 143, and cysteine 156. Positions 149-160 (SIYVHTFCDPFF) are interacts with SPRY1, SPRY2, and SPRY4. The interval 167-178 (FSNIRINMQKEI) is interacts with SPRY1, SPRY2, SPRY3 and SPRY4.

The protein belongs to the caveolin family. In terms of assembly, homooligomer. Interacts with GLIPR2. Interacts with NOSTRIN. Interacts with SNAP25 and STX1A. Interacts (via the N-terminus) with DPP4; the interaction is direct. Interacts with CTNNB1, CDH1 and JUP. Interacts with PACSIN2; this interaction induces membrane tubulation. Interacts with SLC7A9. Interacts with BMX and BTK. Interacts with TGFBR1. Interacts with CAVIN3 (via leucine-zipper domain) in a cholesterol-sensitive manner. Interacts with CAVIN1. Interacts with EHD2 in a cholesterol-dependent manner. Forms a ternary complex with UBXN6 and VCP; mediates CAV1 targeting to lysosomes for degradation. Interacts with ABCG1; this interaction regulates ABCG1-mediated cholesterol efflux. Interacts with NEU3; this interaction enhances NEU3 sialidase activity within caveola. Interacts (via C-terminus) with SPRY1, SPRY2 (via C-terminus), SPRY3, and SPRY4. Interacts with IGFBP5; this interaction allows trafficking of IGFBP5 from the plasma membrane to the nucleus. Post-translationally, phosphorylated at Tyr-14 by ABL1 in response to oxidative stress. Ubiquitinated. Undergo monoubiquitination and multi- and/or polyubiquitination. Monoubiquitination of N-terminal lysines promotes integration in a ternary complex with UBXN6 and VCP which promotes oligomeric CAV1 targeting to lysosomes for degradation. Ubiquitinated by ZNRF1; leading to degradation and modulation of the TLR4-mediated immune response.

It is found in the golgi apparatus membrane. The protein resides in the cell membrane. Its subcellular location is the membrane. It localises to the caveola. The protein localises to the membrane raft. In terms of biological role, may act as a scaffolding protein within caveolar membranes. Forms a stable heterooligomeric complex with CAV2 that targets to lipid rafts and drives caveolae formation. Mediates the recruitment of CAVIN proteins (CAVIN1/2/3/4) to the caveolae. Interacts directly with G-protein alpha subunits and can functionally regulate their activity. Involved in the costimulatory signal essential for T-cell receptor (TCR)-mediated T-cell activation. Its binding to DPP4 induces T-cell proliferation and NF-kappa-B activation in a T-cell receptor/CD3-dependent manner. Recruits CTNNB1 to caveolar membranes and may regulate CTNNB1-mediated signaling through the Wnt pathway. Negatively regulates TGFB1-mediated activation of SMAD2/3 by mediating the internalization of TGFBR1 from membrane rafts leading to its subsequent degradation. Binds 20(S)-hydroxycholesterol (20(S)-OHC). This is Caveolin-1 (CAV1) from Felis catus (Cat).